The primary structure comprises 132 residues: Small ribosomal subunit protein uS8 (132 aa).

This sequence belongs to the universal ribosomal protein uS8 family. In terms of assembly, part of the 30S ribosomal subunit. Contacts proteins S5 and S12.

Functionally, one of the primary rRNA binding proteins, it binds directly to 16S rRNA central domain where it helps coordinate assembly of the platform of the 30S subunit. This chain is Small ribosomal subunit protein uS8, found in Rickettsia felis (strain ATCC VR-1525 / URRWXCal2) (Rickettsia azadi).